A 428-amino-acid polypeptide reads, in one-letter code: GTPase Obg (428 aa).

The region spanning 1 to 158 (MFVDQVKIYV…RYIVLELKVL (158 aa)) is the Obg domain. Residues 118-143 (KGGRGGRGNTRFATPANPAPQLSENG) are disordered. Residues 159–329 (ADVGLVGFPS…LLFEIADRLE (171 aa)) enclose the OBG-type G domain. GTP contacts are provided by residues 165 to 172 (GFPSVGKS), 190 to 194 (FTTLN), 212 to 215 (DLPG), 282 to 285 (NKMD), and 310 to 312 (SAV). Mg(2+)-binding residues include Ser-172 and Thr-192. In terms of domain architecture, OCT spans 350–428 (KLEDEEAPFE…LLEFEFEFID (79 aa)).

The protein belongs to the TRAFAC class OBG-HflX-like GTPase superfamily. OBG GTPase family. In terms of assembly, monomer. The cofactor is Mg(2+).

The protein resides in the cytoplasm. In terms of biological role, an essential GTPase which binds GTP, GDP and possibly (p)ppGpp with moderate affinity, with high nucleotide exchange rates and a fairly low GTP hydrolysis rate. Plays a role in control of the cell cycle, stress response, ribosome biogenesis and in those bacteria that undergo differentiation, in morphogenesis control. In Bacillus licheniformis (strain ATCC 14580 / DSM 13 / JCM 2505 / CCUG 7422 / NBRC 12200 / NCIMB 9375 / NCTC 10341 / NRRL NRS-1264 / Gibson 46), this protein is GTPase Obg.